Reading from the N-terminus, the 423-residue chain is Gamma-glutamyl phosphate reductase (423 aa).

Belongs to the gamma-glutamyl phosphate reductase family.

The protein localises to the cytoplasm. It catalyses the reaction L-glutamate 5-semialdehyde + phosphate + NADP(+) = L-glutamyl 5-phosphate + NADPH + H(+). Its pathway is amino-acid biosynthesis; L-proline biosynthesis; L-glutamate 5-semialdehyde from L-glutamate: step 2/2. Catalyzes the NADPH-dependent reduction of L-glutamate 5-phosphate into L-glutamate 5-semialdehyde and phosphate. The product spontaneously undergoes cyclization to form 1-pyrroline-5-carboxylate. In Burkholderia vietnamiensis (strain G4 / LMG 22486) (Burkholderia cepacia (strain R1808)), this protein is Gamma-glutamyl phosphate reductase.